The chain runs to 233 residues: 2-C-methyl-D-erythritol 4-phosphate cytidylyltransferase (233 aa).

It belongs to the IspD/TarI cytidylyltransferase family. IspD subfamily.

It catalyses the reaction 2-C-methyl-D-erythritol 4-phosphate + CTP + H(+) = 4-CDP-2-C-methyl-D-erythritol + diphosphate. It participates in isoprenoid biosynthesis; isopentenyl diphosphate biosynthesis via DXP pathway; isopentenyl diphosphate from 1-deoxy-D-xylulose 5-phosphate: step 2/6. Its function is as follows. Catalyzes the formation of 4-diphosphocytidyl-2-C-methyl-D-erythritol from CTP and 2-C-methyl-D-erythritol 4-phosphate (MEP). This Syntrophotalea carbinolica (strain DSM 2380 / NBRC 103641 / GraBd1) (Pelobacter carbinolicus) protein is 2-C-methyl-D-erythritol 4-phosphate cytidylyltransferase.